We begin with the raw amino-acid sequence, 144 residues long: Endoribonuclease YbeY (144 aa).

Residues histidine 105, histidine 109, and aspartate 115 each coordinate Zn(2+).

Belongs to the endoribonuclease YbeY family. Requires Zn(2+) as cofactor.

It localises to the cytoplasm. In terms of biological role, single strand-specific metallo-endoribonuclease involved in late-stage 70S ribosome quality control and in maturation of the 3' terminus of the 16S rRNA. This chain is Endoribonuclease YbeY, found in Chlorobium limicola (strain DSM 245 / NBRC 103803 / 6330).